The primary structure comprises 282 residues: MGISSILLSALIAGGALALPAAEPVSFDIRDENITLARRAEAINYNQDYIASGANVQYSPNMAAGSFSINYNTQGDFVVGLGWQPGDANPITYSGSFSASGVGILAVYGWSTNPLVEYYVMEVHDGYQTAGTHKGTVTTDGGTYDIWEHQQVNQPSILGTSTFNQYISIRQSPRTSGTVTVQNHFNAWAQAGMNLGTLNYQVMAVESWSGSGSGQISLSKGTGGGSTTTTPTGPTSTSTAPSSGGTGAAQWGQCGGIGWTGPTTCVAPYTCKYENAYYSQCQ.

Residues 1–39 (MGISSILLSALIAGGALALPAAEPVSFDIRDENITLARR) form the signal peptide. Asn33 carries N-linked (GlcNAc...) asparagine glycosylation. The 180-residue stretch at 40–219 (AEAINYNQDY…GSGSGQISLS (180 aa)) folds into the GH11 domain. Catalysis depends on Glu117, which acts as the Nucleophile. Glu206 serves as the catalytic Proton donor. A disordered region spans residues 214-245 (GQISLSKGTGGGSTTTTPTGPTSTSTAPSSGG). The segment covering 227-243 (TTTTPTGPTSTSTAPSS) has biased composition (low complexity). The CBM1 domain occupies 246–282 (TGAAQWGQCGGIGWTGPTTCVAPYTCKYENAYYSQCQ).

It belongs to the glycosyl hydrolase 11 (cellulase G) family.

It localises to the secreted. It catalyses the reaction Endohydrolysis of (1-&gt;4)-beta-D-xylosidic linkages in xylans.. It participates in glycan degradation; xylan degradation. Significantly inhibited by the wheat xylanase inhibiting protein I (XIP-I) and the proteinaceous endoxylanase Triticum aestivum xylanase inhibitors I (TAXI-I), but not TAXI-II. Endo-1,4-beta-xylanase involved in the hydrolysis of xylan, a major structural heterogeneous polysaccharide found in plant biomass representing the second most abundant polysaccharide in the biosphere, after cellulose. In Talaromyces funiculosus (Fruitlet core rot fungus), this protein is Endo-1,4-beta-xylanase B (xynB).